We begin with the raw amino-acid sequence, 201 residues long: L(+)-tartrate dehydratase subunit beta (201 aa).

H37 is a catalytic residue.

Belongs to the class-I fumarase family. Heterotetramer of two alpha and two beta subunits.

It carries out the reaction (2R,3R)-tartrate = oxaloacetate + H2O. This Shigella boydii serotype 4 (strain Sb227) protein is L(+)-tartrate dehydratase subunit beta (ttdB).